The sequence spans 413 residues: Protein arginine N-methyltransferase 2 (413 aa).

Residues Leu148–Val187 form a disordered region. Residues Ala162–Ser182 show a composition bias toward low complexity. An RMT2 domain is found at Thr192–Gln413. S-adenosyl-L-methionine-binding positions include Tyr199, Met229, Phe252 to Ile257, Glu273 to His275, Trp300 to Gln301, and Asp321.

Belongs to the class I-like SAM-binding methyltransferase superfamily. RMT2 methyltransferase family. In terms of assembly, monomer.

Its subcellular location is the cytoplasm. It localises to the nucleus. Its function is as follows. S-adenosyl-L-methionine-dependent protein-arginine N-methyltransferase that methylates the delta-nitrogen atom of arginine residues to form N5-methylarginine (type IV) in target proteins. Monomethylates ribosomal protein L12. The protein is Protein arginine N-methyltransferase 2 of Eremothecium gossypii (strain ATCC 10895 / CBS 109.51 / FGSC 9923 / NRRL Y-1056) (Yeast).